The following is a 275-amino-acid chain: Large ribosomal subunit protein uL2c (275 aa).

Residues 225-249 (PVDHPHGGGEGRAPIGRKKPTTPWG) form a disordered region.

The protein belongs to the universal ribosomal protein uL2 family. Part of the 50S ribosomal subunit.

It is found in the plastid. This Cuscuta reflexa (Southern Asian dodder) protein is Large ribosomal subunit protein uL2c (rpl2).